We begin with the raw amino-acid sequence, 251 residues long: Cell division protein ZapD (251 aa).

Belongs to the ZapD family. Interacts with FtsZ.

Its subcellular location is the cytoplasm. Functionally, cell division factor that enhances FtsZ-ring assembly. Directly interacts with FtsZ and promotes bundling of FtsZ protofilaments, with a reduction in FtsZ GTPase activity. The chain is Cell division protein ZapD from Burkholderia orbicola (strain MC0-3).